Consider the following 262-residue polypeptide: Thiazole synthase (262 aa).

Residue K95 is the Schiff-base intermediate with DXP of the active site. 1-deoxy-D-xylulose 5-phosphate-binding positions include G156, 182–183 (AG), and 204–205 (NT).

Belongs to the ThiG family. In terms of assembly, homotetramer. Forms heterodimers with either ThiH or ThiS.

It is found in the cytoplasm. It carries out the reaction [ThiS sulfur-carrier protein]-C-terminal-Gly-aminoethanethioate + 2-iminoacetate + 1-deoxy-D-xylulose 5-phosphate = [ThiS sulfur-carrier protein]-C-terminal Gly-Gly + 2-[(2R,5Z)-2-carboxy-4-methylthiazol-5(2H)-ylidene]ethyl phosphate + 2 H2O + H(+). Its pathway is cofactor biosynthesis; thiamine diphosphate biosynthesis. Catalyzes the rearrangement of 1-deoxy-D-xylulose 5-phosphate (DXP) to produce the thiazole phosphate moiety of thiamine. Sulfur is provided by the thiocarboxylate moiety of the carrier protein ThiS. In vitro, sulfur can be provided by H(2)S. The chain is Thiazole synthase from Yersinia enterocolitica serotype O:8 / biotype 1B (strain NCTC 13174 / 8081).